Consider the following 736-residue polypeptide: Transcription regulator protein BACH1 (736 aa).

Residues 34 to 100 (CDVTIFVEGQ…AYTAKLILSK (67 aa)) form the BTB domain. Ser-196 carries the phosphoserine modification. Residues 286-295 (MEPEETKKDP) are compositionally biased toward basic and acidic residues. Disordered stretches follow at residues 286–312 (MEPE…FPHN) and 349–389 (KPLS…RSSV). Ser-364 and Ser-445 each carry phosphoserine. Positions 557–620 (CIHDIRRRSK…GETKQNLTGL (64 aa)) constitute a bZIP domain. The interval 562 to 578 (RRRSKNRIAAQRCRKRK) is basic motif. The segment at 582-589 (IQNLESEI) is leucine-zipper. The interval 680-719 (LPPCARGNSEPGYARGQESQQMSTATSEQAGPAEQCRQSG) is disordered. Residues 696 to 708 (QESQQMSTATSEQ) show a composition bias toward polar residues.

Belongs to the bZIP family. CNC subfamily. In terms of assembly, heterodimer of BACH1 and MAFK. In terms of processing, ubiquitinated by the SCF(FBXL17) complex or by the by the SCF(FBXO22) complex, leading to its degradation by the proteasome. Under oxidative stress, reactive oxygen species covalently modify cysteine residues on the bZIP domain of BACH1 and release it from chromatin. If the BTB domain of BACH1 remains intact, its beta1-alpha6 degron is recognized by FBXO22, promoting its ubiquitination and degradation. If the structural integrity of the beta1-alpha6 degron is compromised, FBXL17 will transiently associate with the BACH1 BTB dimer and remodel it into stably bound monomer for ubiquitination and degradation.

Its subcellular location is the nucleus. In terms of biological role, transcriptional regulator that acts as a repressor or activator, depending on the context. Binds to NF-E2 DNA binding sites. Plays important roles in coordinating transcription activation and repression by MAFK. Together with MAF, represses the transcription of genes under the control of the NFE2L2 oxidative stress pathway. The protein is Transcription regulator protein BACH1 of Homo sapiens (Human).